The sequence spans 221 residues: Chalcone--flavanone isomerase 2 (221 aa).

Residues Thr50, Asn115, and Ser192 each coordinate substrate.

It belongs to the chalcone isomerase family.

The catalysed reaction is a chalcone = a flavanone.. It participates in secondary metabolite biosynthesis; flavonoid biosynthesis. In terms of biological role, catalyzes the intramolecular cyclization of bicyclic chalcones into tricyclic (S)-flavanones. Responsible for the isomerization of 4,2',4',6'-tetrahydroxychalcone (also termed chalcone) into naringenin. This is Chalcone--flavanone isomerase 2 (CHI2) from Lotus japonicus (Lotus corniculatus var. japonicus).